The primary structure comprises 180 residues: ATP-dependent protease subunit HslV (180 aa).

Thr-5 is an active-site residue. Na(+)-binding residues include Gly-161, Cys-164, and Thr-167.

This sequence belongs to the peptidase T1B family. HslV subfamily. In terms of assembly, a double ring-shaped homohexamer of HslV is capped on each side by a ring-shaped HslU homohexamer. The assembly of the HslU/HslV complex is dependent on binding of ATP.

It is found in the cytoplasm. It catalyses the reaction ATP-dependent cleavage of peptide bonds with broad specificity.. Its activity is regulated as follows. Allosterically activated by HslU binding. In terms of biological role, protease subunit of a proteasome-like degradation complex believed to be a general protein degrading machinery. The protein is ATP-dependent protease subunit HslV of Campylobacter curvus (strain 525.92).